Here is a 511-residue protein sequence, read N- to C-terminus: 2-isopropylmalate synthase (511 aa).

The region spanning 5–267 (LIVFDTTLRD…DTRIDATQIV (263 aa)) is the Pyruvate carboxyltransferase domain. Asp14, His202, His204, and Asn238 together coordinate Mn(2+). The regulatory domain stretch occupies residues 393 to 511 (RLVASRFHSE…SKLERLNPQL (119 aa)).

The protein belongs to the alpha-IPM synthase/homocitrate synthase family. LeuA type 1 subfamily. In terms of assembly, homodimer. Requires Mn(2+) as cofactor.

It is found in the cytoplasm. It carries out the reaction 3-methyl-2-oxobutanoate + acetyl-CoA + H2O = (2S)-2-isopropylmalate + CoA + H(+). The protein operates within amino-acid biosynthesis; L-leucine biosynthesis; L-leucine from 3-methyl-2-oxobutanoate: step 1/4. Catalyzes the condensation of the acetyl group of acetyl-CoA with 3-methyl-2-oxobutanoate (2-ketoisovalerate) to form 3-carboxy-3-hydroxy-4-methylpentanoate (2-isopropylmalate). The protein is 2-isopropylmalate synthase of Aromatoleum aromaticum (strain DSM 19018 / LMG 30748 / EbN1) (Azoarcus sp. (strain EbN1)).